The following is a 36-amino-acid chain: Cytochrome b6-f complex subunit 5 (36 aa).

Residues 5 to 25 (LLSGIVLGLIPITILGLLMAA) traverse the membrane as a helical segment.

It belongs to the PetG family. In terms of assembly, the 4 large subunits of the cytochrome b6-f complex are cytochrome b6, subunit IV (17 kDa polypeptide, PetD), cytochrome f and the Rieske protein, while the 4 small subunits are PetG, PetL, PetM and PetN. The complex functions as a dimer.

The protein resides in the plastid. It localises to the chloroplast thylakoid membrane. In terms of biological role, component of the cytochrome b6-f complex, which mediates electron transfer between photosystem II (PSII) and photosystem I (PSI), cyclic electron flow around PSI, and state transitions. PetG is required for either the stability or assembly of the cytochrome b6-f complex. The sequence is that of Cytochrome b6-f complex subunit 5 from Cyanidioschyzon merolae (strain NIES-3377 / 10D) (Unicellular red alga).